Here is a 470-residue protein sequence, read N- to C-terminus: Low molecular weight neuronal intermediate filament (470 aa).

The tract at residues 1-91 is head; it reads MTSRELYTSS…KIVRTNEKEQ (91 aa). One can recognise an IF rod domain in the interval 88–399; the sequence is EKEQLQGLND…KLLEGEETRL (312 aa). Positions 91–123 are coil 1A; the sequence is QLQGLNDRFVTYIEKVHHLEQQNKLLESEVTLL. Positions 121 to 136 are linker 1; that stretch reads TLLRQKHSEPSRLSHI. Positions 137-232 are coil 1B; it reads YEQEIRELRS…KVHEEEIAEL (96 aa). The linker 12 stretch occupies residues 233 to 251; sequence QASVQEAQISVEMDVVSKP. Positions 252–270 are coil 2A; that stretch reads DLTAALKEIRMQYEVLSAR. A linker 2 region spans residues 271–279; that stretch reads NQQSSEEWY. The coil 2B stretch occupies residues 280–395; the sequence is QAKIANVSLE…AAYRKLLEGE (116 aa). Positions 396 to 470 are tail; it reads ETRLTSVGGG…EKISQKAAAN (75 aa). A compositionally biased stretch (low complexity) spans 414-431; sequence FSSGSYSGGRSSTTSTIS. The segment at 414–470 is disordered; the sequence is FSSGSYSGGRSSTTSTISIRKEEKKESPEGGKGGSSGQPKTSKPGDQEKISQKAAAN. A compositionally biased stretch (basic and acidic residues) spans 432–442; it reads IRKEEKKESPE.

It belongs to the intermediate filament family. As to expression, nervous system; in axons in the PNS and in small perikarya in the dorsal root ganglion.

The polypeptide is Low molecular weight neuronal intermediate filament (Xenopus laevis (African clawed frog)).